We begin with the raw amino-acid sequence, 468 residues long: uncharacterized protein (468 aa).

In terms of domain architecture, HTH gntR-type spans 1 to 69 (MKKYQQLAEQ…PQSGYYVAPQ (69 aa)). Lys312 is subject to N6-(pyridoxal phosphate)lysine.

This sequence in the C-terminal section; belongs to the class-I pyridoxal-phosphate-dependent aminotransferase family.

This is an uncharacterized protein from Escherichia coli (strain K12).